A 217-amino-acid polypeptide reads, in one-letter code: Polyadenylate-binding protein 3 (217 aa).

The interval Met-1–Met-28 is disordered. The span at Glu-15 to Met-28 shows a compositional bias: acidic residues. Positions Ala-30–Gln-71 form a coiled coil. The necessary for homooligomerization stretch occupies residues Ser-75–Tyr-216. The region spanning Arg-89–Thr-165 is the RRM domain. The Nuclear localization signal signature appears at Pro-162 to Gly-169.

As to quaternary structure, monomer and homooligomer. Binds RNA as a monomer and oligomerizes when bound to poly(A). Forms a complex with cleavage and polyadenylation specificity factor (CPSF) subunits PAPS4, PABN1, PABN2, CSTF50 and FIPS5. Interacts with CSP3.

It localises to the nucleus speckle. The protein localises to the cytoplasm. Functionally, involved in the 3'-end formation of mRNA precursors (pre-mRNA) by the addition of a poly(A) tail of 200-250 nt to the upstream cleavage product. Stimulates poly(A) polymerase (PAPOLA) conferring processivity on the poly(A) tail elongation reaction and also controls the poly(A) tail length. Increases the affinity of poly(A) polymerase for RNA. Binds to poly(A) and to poly(G) with high affinity. May protect the poly(A) tail from degradation. The protein is Polyadenylate-binding protein 3 of Arabidopsis thaliana (Mouse-ear cress).